The chain runs to 141 residues: Large ribosomal subunit protein uL11 (141 aa).

This sequence belongs to the universal ribosomal protein uL11 family. As to quaternary structure, part of the ribosomal stalk of the 50S ribosomal subunit. Interacts with L10 and the large rRNA to form the base of the stalk. L10 forms an elongated spine to which L12 dimers bind in a sequential fashion forming a multimeric L10(L12)X complex. In terms of processing, one or more lysine residues are methylated.

Its function is as follows. Forms part of the ribosomal stalk which helps the ribosome interact with GTP-bound translation factors. This Synechococcus sp. (strain ATCC 27144 / PCC 6301 / SAUG 1402/1) (Anacystis nidulans) protein is Large ribosomal subunit protein uL11.